An 89-amino-acid polypeptide reads, in one-letter code: Small ribosomal subunit protein uS17 (89 aa).

The protein belongs to the universal ribosomal protein uS17 family. In terms of assembly, part of the 30S ribosomal subunit.

One of the primary rRNA binding proteins, it binds specifically to the 5'-end of 16S ribosomal RNA. This chain is Small ribosomal subunit protein uS17, found in Leptospira borgpetersenii serovar Hardjo-bovis (strain JB197).